Reading from the N-terminus, the 492-residue chain is UDP-N-acetylmuramoyl-L-alanyl-D-glutamate--2,6-diaminopimelate ligase (492 aa).

Residue S30 coordinates UDP-N-acetyl-alpha-D-muramoyl-L-alanyl-D-glutamate. An ATP-binding site is contributed by 114–120; it reads GTNGKTS. Residues 156 to 157, S183, Q189, and R191 each bind UDP-N-acetyl-alpha-D-muramoyl-L-alanyl-D-glutamate; that span reads TT. Residue K223 is modified to N6-carboxylysine. Meso-2,6-diaminopimelate-binding positions include R389, 413-416, G462, and E466; that span reads DNPR. Positions 413 to 416 match the Meso-diaminopimelate recognition motif motif; the sequence is DNPR.

The protein belongs to the MurCDEF family. MurE subfamily. Mg(2+) serves as cofactor. Carboxylation is probably crucial for Mg(2+) binding and, consequently, for the gamma-phosphate positioning of ATP.

The protein resides in the cytoplasm. It catalyses the reaction UDP-N-acetyl-alpha-D-muramoyl-L-alanyl-D-glutamate + meso-2,6-diaminopimelate + ATP = UDP-N-acetyl-alpha-D-muramoyl-L-alanyl-gamma-D-glutamyl-meso-2,6-diaminopimelate + ADP + phosphate + H(+). It functions in the pathway cell wall biogenesis; peptidoglycan biosynthesis. In terms of biological role, catalyzes the addition of meso-diaminopimelic acid to the nucleotide precursor UDP-N-acetylmuramoyl-L-alanyl-D-glutamate (UMAG) in the biosynthesis of bacterial cell-wall peptidoglycan. The polypeptide is UDP-N-acetylmuramoyl-L-alanyl-D-glutamate--2,6-diaminopimelate ligase (Neisseria meningitidis serogroup B (strain ATCC BAA-335 / MC58)).